Reading from the N-terminus, the 47-residue chain is Short neurotoxin D2A (47 aa).

Intrachain disulfides connect Cys-3/Cys-24 and Cys-17/Cys-39.

As to expression, expressed by the venom gland.

The protein localises to the secreted. In Micrurus pyrrhocryptus (Coral snake), this protein is Short neurotoxin D2A.